The following is a 225-amino-acid chain: UPF0173 metal-dependent hydrolase PAE2160 (225 aa).

This sequence belongs to the UPF0173 family.

This is UPF0173 metal-dependent hydrolase PAE2160 from Pyrobaculum aerophilum (strain ATCC 51768 / DSM 7523 / JCM 9630 / CIP 104966 / NBRC 100827 / IM2).